Consider the following 347-residue polypeptide: VIP36-like protein (347 aa).

Positions 1 to 43 are cleaved as a signal peptide; it reads MAAASRPSWWQRWRRRAWARDGAKLLLFLLLLGSGPGPRHVRA. Topologically, residues 44–312 are lumenal; the sequence is GQAVEYLKRE…VPPTPLSGLA (269 aa). The L-type lectin-like domain maps to 48 to 273; it reads EYLKREHSLS…DVISLKLFEL (226 aa). The a carbohydrate site is built by Ser92 and Asp127. Residues Asp158, Tyr160, and Asn162 each coordinate Ca(2+). 160–162 contributes to the a carbohydrate binding site; that stretch reads YPN. A glycan (N-linked (GlcNAc...) asparagine) is linked at Asn180. His187 is a binding site for a carbohydrate. Asp190 provides a ligand contact to Ca(2+). Residues Cys199 and Cys236 are joined by a disulfide bond. 257–259 is a binding site for a carbohydrate; it reads GDL. Residues 313–335 form a helical membrane-spanning segment; the sequence is LFLIVFFSLVFSVFAIVIGIILY. At 336–347 the chain is on the cytoplasmic side; it reads NKWQDQSRKRFY. The Endoplasmic reticulum retention signal motif lies at 343-345; it reads RKR.

The protein localises to the endoplasmic reticulum membrane. The protein resides in the golgi apparatus membrane. Functionally, may be involved in the regulation of export from the endoplasmic reticulum of a subset of glycoproteins. May function as a regulator of ERGIC-53. In Mus musculus (Mouse), this protein is VIP36-like protein (Lman2l).